We begin with the raw amino-acid sequence, 603 residues long: Glutamyl-tRNA(Gln) amidotransferase subunit E (603 aa).

The protein belongs to the GatB/GatE family. GatE subfamily. Heterodimer of GatD and GatE.

It carries out the reaction L-glutamyl-tRNA(Gln) + L-glutamine + ATP + H2O = L-glutaminyl-tRNA(Gln) + L-glutamate + ADP + phosphate + H(+). Allows the formation of correctly charged Gln-tRNA(Gln) through the transamidation of misacylated Glu-tRNA(Gln) in organisms which lack glutaminyl-tRNA synthetase. The reaction takes place in the presence of glutamine and ATP through an activated gamma-phospho-Glu-tRNA(Gln). The GatDE system is specific for glutamate and does not act on aspartate. This chain is Glutamyl-tRNA(Gln) amidotransferase subunit E, found in Thermoplasma acidophilum (strain ATCC 25905 / DSM 1728 / JCM 9062 / NBRC 15155 / AMRC-C165).